The primary structure comprises 264 residues: Eukaryotic translation initiation factor 6 (264 aa).

Belongs to the eIF-6 family. In terms of assembly, monomer. Associates with the 60S ribosomal subunit.

It is found in the cytoplasm. It localises to the nucleus. The protein resides in the nucleolus. Its function is as follows. Binds to the 60S ribosomal subunit and prevents its association with the 40S ribosomal subunit to form the 80S initiation complex in the cytoplasm. May also be involved in ribosome biogenesis. This is Eukaryotic translation initiation factor 6 from Toxoplasma gondii (strain ATCC 50861 / VEG).